Consider the following 122-residue polypeptide: Large ribosomal subunit protein uL24 (122 aa).

The protein belongs to the universal ribosomal protein uL24 family. In terms of assembly, part of the 50S ribosomal subunit.

Its function is as follows. One of two assembly initiator proteins, it binds directly to the 5'-end of the 23S rRNA, where it nucleates assembly of the 50S subunit. Functionally, one of the proteins that surrounds the polypeptide exit tunnel on the outside of the subunit. This Trichodesmium erythraeum (strain IMS101) protein is Large ribosomal subunit protein uL24.